The chain runs to 148 residues: UPF0756 membrane protein YeaL (148 aa).

The next 4 membrane-spanning stretches (helical) occupy residues A14–V34, L51–L71, L86–M106, and V121–V141.

The protein belongs to the UPF0756 family.

The protein resides in the cell membrane. The sequence is that of UPF0756 membrane protein YeaL from Escherichia coli O127:H6 (strain E2348/69 / EPEC).